Consider the following 256-residue polypeptide: Undecaprenyl-diphosphatase (256 aa).

A run of 7 helical transmembrane segments spans residues 39–59, 77–97, 101–121, 135–155, 176–196, 206–226, and 233–253; these read PTDA…AVLV, RTVI…YMLF, FTGG…TGLM, ISTK…LPGV, LMVS…LDCL, LPGA…MDVL, and VSFS…TALP.

The protein belongs to the UppP family.

It localises to the cell membrane. The catalysed reaction is di-trans,octa-cis-undecaprenyl diphosphate + H2O = di-trans,octa-cis-undecaprenyl phosphate + phosphate + H(+). Catalyzes the dephosphorylation of undecaprenyl diphosphate (UPP). This chain is Undecaprenyl-diphosphatase, found in Methanothrix thermoacetophila (strain DSM 6194 / JCM 14653 / NBRC 101360 / PT) (Methanosaeta thermophila).